Here is a 1500-residue protein sequence, read N- to C-terminus: Rho GTPase-activating protein 35 (1500 aa).

The interval 1–266 (MMMARKQDVR…IPYFEALKQQ (266 aa)) is has GTPase activity, required for proper localization. Residues Lys28, 33–37 (IGKSC), Leu52, Ser56, 95–97 (EQT), 201–203 (KCD), and 229–231 (SAR) contribute to the GTP site. FF domains lie at 270 to 327 (IATA…HIHR), 368 to 422 (KLLE…HLEK), 429 to 483 (RAEM…HQKQ), and 485 to 550 (IDKA…HIHF). A Phosphotyrosine modification is found at Tyr308. Position 589 is a phosphoserine (Ser589). The pG1 pseudoGTPase domain maps to 592–767 (DPNIDRINLV…LLDSKRNLNL (176 aa)). A phosphoserine mark is found at Ser770 and Ser773. The pG2 pseudoGTPase domain occupies 783-947 (RIVMCLMCGD…FKDVVDKKNI (165 aa)). Phosphoserine is present on residues Ser970, Ser975, Ser985, Ser1002, and Ser1073. The segment at 970–989 (SPRAGSPLCNSNLQDSEEDI) is disordered. The tract at residues 1058-1090 (SYLDQGHRDGQRKSVSSSTWLPPDGFDPSDYAE) is disordered. Residue Tyr1088 is modified to Phosphotyrosine. Phosphotyrosine; by ABL2 and PTK6 is present on Tyr1106. Residues 1125–1142 (KAQSNGSGNGSDSEMDTS) show a composition bias toward polar residues. The interval 1125 to 1147 (KAQSNGSGNGSDSEMDTSSLERG) is disordered. A phosphoserine mark is found at Ser1135, Ser1143, Ser1151, Ser1177, Ser1180, and Ser1222. The tract at residues 1178–1208 (VGSDDELGPIRKKEEDQASQGYKGDNAVIPY) is disordered. Residues 1214–1237 (PRRRNILRSLRRNTKKPKPKPRPS) are required for phospholipid binding and regulation of the substrate preference. Thr1227 is modified (phosphothreonine). Ser1237 is subject to Phosphoserine. Residues 1250 to 1437 (VPLTTVVTPE…LFIQQCPFFF (188 aa)) form the Rho-GAP domain. Residues 1444 to 1500 (EPPGATPSSPSAVASTVPFLTSTPVTSQPSPPQSPPPTPQSPMQALLPSQLQAEHTL) form a disordered region. The segment covering 1449 to 1471 (TPSSPSAVASTVPFLTSTPVTSQ) has biased composition (low complexity). Residues 1472–1483 (PSPPQSPPPTPQ) are compositionally biased toward pro residues. Residues Ser1473 and Ser1477 each carry the phosphoserine modification. Thr1481 carries the post-translational modification Phosphothreonine. A Phosphoserine modification is found at Ser1484. Residues 1490–1500 (LPSQLQAEHTL) show a composition bias toward polar residues.

As to quaternary structure, interacts with RASA1. Interacts with the general transcription factor GTF2I, the interaction sequesters GTF2I in the cytoplasm. Phosphorylation of Tyr-1106 by PTK6 promotes the association with RASA1, inactivating RHOA while activating RAS. Phosphorylation at Tyr-308 by PDGFRA inhibits binding to GTF2I. Phosphorylated by PRKCA at Ser-1222 and Thr-1227, induces relocalization from the cytoplasm to regions of plasma membrane ruffling and prevents the binding and substrate specificity regulation by phospholipids. In brain, phosphorylated by FYN and SRC. During focal adhesion formation, phosphorylated by MAPK1 and MAPK3 at the C-terminal region, probably at Ser-1452, Ser-1477, Thr-1481 and Ser-1484. Phosphorylation by MAPK1 and MAPK3 inhibits GAP function and localizes ARGHAP35 away from newly forming focal adhesions and stress fibers in cells spreading on fibronectin. Phosphorylation at Ser-1477 and Thr-1481 by GSK3B requires priming by MAPK and inhibits RhoGAP activity and modulates polarized cell migration. In terms of tissue distribution, strongly expressed in retina (photoreceptor layer) and brain. Expression is maximal in the occipital, frontal, temporal lobe and also the cerebellum. Medium expression in the medulla and also in kidney, lung, liver, heart and spleen.

The protein localises to the cytoplasm. It is found in the cytoskeleton. Its subcellular location is the cilium basal body. The protein resides in the nucleus. It localises to the cell membrane. Functionally, rho GTPase-activating protein (GAP). Binds several acidic phospholipids which inhibits the Rho GAP activity to promote the Rac GAP activity. This binding is inhibited by phosphorylation by PRKCA. Involved in cell differentiation as well as cell adhesion and migration, plays an important role in retinal tissue morphogenesis, neural tube fusion, midline fusion of the cerebral hemispheres and mammary gland branching morphogenesis. Transduces signals from p21-ras to the nucleus, acting via the ras GTPase-activating protein (GAP). Transduces SRC-dependent signals from cell-surface adhesion molecules, such as laminin, to promote neurite outgrowth. Regulates axon outgrowth, guidance and fasciculation. Modulates Rho GTPase-dependent F-actin polymerization, organization and assembly, is involved in polarized cell migration and in the positive regulation of ciliogenesis and cilia elongation. During mammary gland development, is required in both the epithelial and stromal compartments for ductal outgrowth. Represses transcription of the glucocorticoid receptor by binding to the cis-acting regulatory sequence 5'-GAGAAAAGAAACTGGAGAAACTC-3'; this function is however unclear and would need additional experimental evidences. This is Rho GTPase-activating protein 35 from Canis lupus familiaris (Dog).